Reading from the N-terminus, the 165-residue chain is Large ribosomal subunit protein uL10 (165 aa).

This sequence belongs to the universal ribosomal protein uL10 family. As to quaternary structure, part of the ribosomal stalk of the 50S ribosomal subunit. The N-terminus interacts with L11 and the large rRNA to form the base of the stalk. The C-terminus forms an elongated spine to which L12 dimers bind in a sequential fashion forming a multimeric L10(L12)X complex.

Forms part of the ribosomal stalk, playing a central role in the interaction of the ribosome with GTP-bound translation factors. The polypeptide is Large ribosomal subunit protein uL10 (Burkholderia multivorans (strain ATCC 17616 / 249)).